Consider the following 545-residue polypeptide: ATP synthase subunit alpha (545 aa).

173-180 (GDRKTGKT) is an ATP binding site.

It belongs to the ATPase alpha/beta chains family. In terms of assembly, F-type ATPases have 2 components, CF(1) - the catalytic core - and CF(0) - the membrane proton channel. CF(1) has five subunits: alpha(3), beta(3), gamma(1), delta(1), epsilon(1). CF(0) has three main subunits: a(1), b(2) and c(9-12). The alpha and beta chains form an alternating ring which encloses part of the gamma chain. CF(1) is attached to CF(0) by a central stalk formed by the gamma and epsilon chains, while a peripheral stalk is formed by the delta and b chains.

Its subcellular location is the cell membrane. It carries out the reaction ATP + H2O + 4 H(+)(in) = ADP + phosphate + 5 H(+)(out). Its function is as follows. Produces ATP from ADP in the presence of a proton gradient across the membrane. The alpha chain is a regulatory subunit. This chain is ATP synthase subunit alpha, found in Renibacterium salmoninarum (strain ATCC 33209 / DSM 20767 / JCM 11484 / NBRC 15589 / NCIMB 2235).